The following is a 521-amino-acid chain: Glutamate--tRNA ligase (521 aa).

Residues 13-23 (PSPSGFLHVGG) carry the 'HIGH' region motif. The 'KMSKS' region motif lies at 253–257 (KLSKR). Lysine 256 serves as a coordination point for ATP.

The protein belongs to the class-I aminoacyl-tRNA synthetase family. Glutamate--tRNA ligase type 1 subfamily. Monomer.

It is found in the cytoplasm. The catalysed reaction is tRNA(Glu) + L-glutamate + ATP = L-glutamyl-tRNA(Glu) + AMP + diphosphate. Its function is as follows. Catalyzes the attachment of glutamate to tRNA(Glu) in a two-step reaction: glutamate is first activated by ATP to form Glu-AMP and then transferred to the acceptor end of tRNA(Glu). This is Glutamate--tRNA ligase from Leptospira interrogans serogroup Icterohaemorrhagiae serovar copenhageni (strain Fiocruz L1-130).